The primary structure comprises 288 residues: MNEQKMNEQMKKTAKTSGQKGPGGRALDRLTLKQDEARPVQNTRVEAPRVTYTIRDESEISPETEEDGFPDGYLECIIRGEFSEPILEEDFLFKSFESLEEVEQNLSRQVLEASSLLESSLEYMTKGTKQEKTEVTQETPPLRVGASSLLAGGPAEKPEGGVYCGVLSMLECPQAGCKKKLRGKTALRKHMLVHGPRRHVCAECGKAFTESSKLKRHFLVHTGEKPYQCTFEGCGKRFSLDFNLRTHIRIHTGERRFVCPFDGCEKSFIQSNNQKIHILTHAKAGKKC.

Basic and acidic residues-rich tracts occupy residues Met1–Lys11 and Ala26–Arg38. The interval Met1–Pro48 is disordered. 4 consecutive C2H2-type zinc fingers follow at residues Leu170–His194, His199–His221, Tyr227–His251, and Val258–His281. Residues Lys213 and Lys215 each participate in a glycyl lysine isopeptide (Lys-Gly) (interchain with G-Cter in ubiquitin) cross-link.

Belongs to the krueppel C2H2-type zinc-finger protein family. Polyubiquitinated by RNF12, leading to proteasomal degradation. As to expression, restricted to testis, to germ cells in the early stages of spermatogenesis. Not expressed in spermatids, nor spermatozoa. Expressed in embryonic stem (ES) cells.

It localises to the nucleus. In terms of biological role, involved in the reprogramming of X-chromosome inactivation during the acquisition of pluripotency. Required for efficient elongation of TSIX, a non-coding RNA antisense to XIST. Binds DXPas34 enhancer within the TSIX promoter. Involved in ES cell self-renewal. The polypeptide is Zinc finger protein 42 (Zfp42) (Mus musculus (Mouse)).